The following is a 237-amino-acid chain: tRNA-splicing endonuclease subunit Sen2-1 (237 aa).

Catalysis depends on residues tyrosine 148, histidine 156, and lysine 190.

It belongs to the tRNA-intron endonuclease family. As to quaternary structure, tRNA splicing endonuclease is a heterotetramer composed of SEN2, SEN15, SEN34/LENG5 and SEN54.

Its subcellular location is the nucleus. The catalysed reaction is pretRNA = a 3'-half-tRNA molecule with a 5'-OH end + a 5'-half-tRNA molecule with a 2',3'-cyclic phosphate end + an intron with a 2',3'-cyclic phosphate and a 5'-hydroxyl terminus.. Its function is as follows. Constitutes one of the two catalytic subunit of the tRNA-splicing endonuclease complex, a complex responsible for identification and cleavage of the splice sites in pre-tRNA. It cleaves pre-tRNA at the 5'- and 3'-splice sites to release the intron. The products are an intron and two tRNA half-molecules bearing 2',3'-cyclic phosphate and 5'-OH termini. There are no conserved sequences at the splice sites, but the intron is invariably located at the same site in the gene, placing the splice sites an invariant distance from the constant structural features of the tRNA body. Probably carries the active site for 5'-splice site cleavage. The chain is tRNA-splicing endonuclease subunit Sen2-1 (SEN1) from Arabidopsis thaliana (Mouse-ear cress).